Here is a 459-residue protein sequence, read N- to C-terminus: Lipase 4 (459 aa).

An N-terminal signal peptide occupies residues 1 to 14 (MLFLLFLLVAPIYA). A disulfide bridge connects residues Cys110 and Cys281. The active-site Charge relay system is Ser194. Asn229 and Asn266 each carry an N-linked (GlcNAc...) asparagine glycan. Active-site charge relay system residues include Asp343 and His376. Cys359 and Cys404 are joined by a disulfide.

It belongs to the AB hydrolase superfamily. Lipase family. Class Lip subfamily.

Its subcellular location is the secreted. It catalyses the reaction a triacylglycerol + H2O = a diacylglycerol + a fatty acid + H(+). Functionally, secreted lipase that is able to hydrolyze both the neutral triacylglycerols and the monopalmitate ester Tween 40, allowing the use of hydrolyzed products as carbon sources. Has broad lipolytic activity, which may be important for colonization and subsequent infection, therefore contributing to the persistence and virulence in human tissue. The sequence is that of Lipase 4 from Candida albicans (strain SC5314 / ATCC MYA-2876) (Yeast).